A 158-amino-acid polypeptide reads, in one-letter code: C-type lectin BiL (158 aa).

Positions 1 to 23 are cleaved as a signal peptide; the sequence is MGRFIFVSFGLLVVFLSLSGAKG. Disulfide bonds link cysteine 26-cysteine 37, cysteine 54-cysteine 154, cysteine 61-cysteine 156, and cysteine 129-cysteine 146. The region spanning 33 to 155 is the C-type lectin domain; that stretch reads MNGLCYKIFD…CESKNAFLCQ (123 aa). Positions 119, 121, 127, 142, and 143 each coordinate Ca(2+). The short motif at 119-121 is the Galactose-binding element; sequence QPD.

In terms of assembly, homodimer; disulfide-linked. Expressed by the venom gland.

Its subcellular location is the secreted. Lectin with a hemagglutinating activity that is inhibited by galactose, lactose and EDTA. Is calcium-dependent. Shows effects on the renal function of isolated perfused rat kidneys by increasing both perfusion pressure (PP) and renal vascular resistance (RVR). In addition, the urinary flow and glomerular filtration rate (GFR) decreases significantly. The changes observed may reflect direct injury to the glomerular and tubular renal cells, and the rise in permeability in the glomerular endothelial cells, may be the effect of interactions of C-type lectin with endothelial cells or due to release of other mediators by mesangial, tubular and endothelial cells. The chain is C-type lectin BiL from Bothrops insularis (Golden lancehead).